We begin with the raw amino-acid sequence, 226 residues long: MSKLLPIKVWGQGGPNPPRVAIILEELGLPYEFMPIQLSQVKEPEYLAINPNGRLPAIYDPNTDLTLWESGAIVEYLVERYDTAHDISFPRDTNDAQHARQWLFFQASGQGPYYGQACWFKKYHPEPVPSALERYIKEMNRVSGVVDGYLAKQPVPPGGDGPWLVGNKCSFADLAWVSWQMTLKKIIQTEDGYDVENFPHLKNWLDRMVAREPVKKVLSAVMPPPS.

A GST N-terminal domain is found at 4-85 (LLPIKVWGQG…YLVERYDTAH (82 aa)). The region spanning 92–226 (DTNDAQHARQ…VLSAVMPPPS (135 aa)) is the GST C-terminal domain.

Belongs to the GST superfamily.

It participates in secondary metabolite biosynthesis. Functionally, glutathione S-transferase-like protein; part of the gene cluster that mediates the biosynthesis of geodin, an intermediate in the biosynthesis of other natural products. The pathway begins with the synthesis of atrochrysone thioester by the polyketide synthase (PKS) gedC. The atrochrysone carboxyl ACP thioesterase gedB then breaks the thioester bond and releases the atrochrysone carboxylic acid from gedC. The atrochrysone carboxylic acid is then converted to atrochrysone which is further transformed into emodinanthrone. The next step is performed by the emodinanthrone oxygenase gedH that catalyzes the oxidation of emodinanthrone to emodin. Emodin O-methyltransferase encoded probably by gedA then catalyzes methylation of the 8-hydroxy group of emodin to form questin. Ring cleavage of questin by questin oxidase gedK leads to desmethylsulochrin via several intermediates including questin epoxide. Another methylation step probably catalyzed by methyltransferase gedG leads to the formation of sulochrin which is further converted to dihydrogeodin by the sulochrin halogenase gedL. Finally, the dihydrogeodin oxidase gedJ catalyzes the stereospecific phenol oxidative coupling reaction converting dihydrogeodin to geodin. The chain is Glutathione S-transferase-like protein gedE from Aspergillus terreus (strain NIH 2624 / FGSC A1156).